The following is a 147-amino-acid chain: Large ribosomal subunit protein bL9 (147 aa).

This sequence belongs to the bacterial ribosomal protein bL9 family.

Functionally, binds to the 23S rRNA. This Campylobacter jejuni subsp. doylei (strain ATCC BAA-1458 / RM4099 / 269.97) protein is Large ribosomal subunit protein bL9.